A 572-amino-acid polypeptide reads, in one-letter code: Proline--tRNA ligase (572 aa).

It belongs to the class-II aminoacyl-tRNA synthetase family. ProS type 1 subfamily. Homodimer.

The protein localises to the cytoplasm. It carries out the reaction tRNA(Pro) + L-proline + ATP = L-prolyl-tRNA(Pro) + AMP + diphosphate. Functionally, catalyzes the attachment of proline to tRNA(Pro) in a two-step reaction: proline is first activated by ATP to form Pro-AMP and then transferred to the acceptor end of tRNA(Pro). As ProRS can inadvertently accommodate and process non-cognate amino acids such as alanine and cysteine, to avoid such errors it has two additional distinct editing activities against alanine. One activity is designated as 'pretransfer' editing and involves the tRNA(Pro)-independent hydrolysis of activated Ala-AMP. The other activity is designated 'posttransfer' editing and involves deacylation of mischarged Ala-tRNA(Pro). The misacylated Cys-tRNA(Pro) is not edited by ProRS. This is Proline--tRNA ligase from Psychrobacter cryohalolentis (strain ATCC BAA-1226 / DSM 17306 / VKM B-2378 / K5).